The chain runs to 187 residues: Elongation factor P 2 (187 aa).

Belongs to the elongation factor P family.

It is found in the cytoplasm. Its pathway is protein biosynthesis; polypeptide chain elongation. Involved in peptide bond synthesis. Stimulates efficient translation and peptide-bond synthesis on native or reconstituted 70S ribosomes in vitro. Probably functions indirectly by altering the affinity of the ribosome for aminoacyl-tRNA, thus increasing their reactivity as acceptors for peptidyl transferase. The protein is Elongation factor P 2 of Geobacter sulfurreducens (strain ATCC 51573 / DSM 12127 / PCA).